A 445-amino-acid chain; its full sequence is UDP-N-acetylmuramoylalanine--D-glutamate ligase (445 aa).

117-123 (GSNGKTT) serves as a coordination point for ATP.

It belongs to the MurCDEF family.

The protein localises to the cytoplasm. It catalyses the reaction UDP-N-acetyl-alpha-D-muramoyl-L-alanine + D-glutamate + ATP = UDP-N-acetyl-alpha-D-muramoyl-L-alanyl-D-glutamate + ADP + phosphate + H(+). It functions in the pathway cell wall biogenesis; peptidoglycan biosynthesis. Cell wall formation. Catalyzes the addition of glutamate to the nucleotide precursor UDP-N-acetylmuramoyl-L-alanine (UMA). The chain is UDP-N-acetylmuramoylalanine--D-glutamate ligase from Neisseria meningitidis serogroup B (strain ATCC BAA-335 / MC58).